The following is an 892-amino-acid chain: Alanine--tRNA ligase (892 aa).

Zn(2+) is bound by residues His-577, His-581, Cys-680, and His-684.

Belongs to the class-II aminoacyl-tRNA synthetase family. Zn(2+) is required as a cofactor.

It localises to the cytoplasm. It carries out the reaction tRNA(Ala) + L-alanine + ATP = L-alanyl-tRNA(Ala) + AMP + diphosphate. Its function is as follows. Catalyzes the attachment of alanine to tRNA(Ala) in a two-step reaction: alanine is first activated by ATP to form Ala-AMP and then transferred to the acceptor end of tRNA(Ala). Also edits incorrectly charged Ser-tRNA(Ala) and Gly-tRNA(Ala) via its editing domain. This Paenarthrobacter aurescens (strain TC1) protein is Alanine--tRNA ligase.